A 225-amino-acid chain; its full sequence is 3-dehydroquinate dehydratase (225 aa).

Residues Ser6, 30-32 (EWR), and Arg62 contribute to the 3-dehydroquinate site. His118 serves as the catalytic Proton donor/acceptor. Lys143 serves as the catalytic Schiff-base intermediate with substrate. 3-dehydroquinate contacts are provided by Arg186, Ser205, and Gln209.

The protein belongs to the type-I 3-dehydroquinase family. In terms of assembly, homodimer.

It carries out the reaction 3-dehydroquinate = 3-dehydroshikimate + H2O. Its pathway is metabolic intermediate biosynthesis; chorismate biosynthesis; chorismate from D-erythrose 4-phosphate and phosphoenolpyruvate: step 3/7. Involved in the third step of the chorismate pathway, which leads to the biosynthesis of aromatic amino acids. Catalyzes the cis-dehydration of 3-dehydroquinate (DHQ) and introduces the first double bond of the aromatic ring to yield 3-dehydroshikimate. This is 3-dehydroquinate dehydratase from Streptococcus pneumoniae (strain P1031).